The chain runs to 259 residues: Protein unc-50 homolog (259 aa).

M1 is subject to N-acetylmethionine. Over 1–82 the chain is Cytoplasmic; the sequence is MLPSTSLSSS…TKDQWARDDP (82 aa). Phosphoserine is present on S6. The helical transmembrane segment at 83–103 threads the bilayer; the sequence is AFLVLLSIWLCVSTIGFGFVL. The Lumenal segment spans residues 104 to 112; sequence DMGFFETIK. The helical transmembrane segment at 113–133 threads the bilayer; the sequence is LLLWVVFIDCVGVGLLISTLM. Over 134–163 the chain is Cytoplasmic; that stretch reads WFVSNKYLVKRQSRDYDVEWGYAFDVHLNA. The chain crosses the membrane as a helical span at residues 164 to 184; the sequence is FYPLLVILHFIQLFFINHVIL. Topologically, residues 185–187 are lumenal; sequence TDT. The chain crosses the membrane as a helical span at residues 188 to 208; sequence FIGYLVGNTLWLIAVGYYIYV. Topologically, residues 209–222 are cytoplasmic; that stretch reads TFLGYSALPFLKNT. A helical membrane pass occupies residues 223-243; it reads VILLYPFAPLMVLYGLSLALG. Topologically, residues 244 to 259 are lumenal; that stretch reads WNFTHTLCSFYKYRVK.

This sequence belongs to the unc-50 family. As to expression, highly expressed in periodontal ligament and bone marrow, but not in gingival fibroblasts.

It localises to the nucleus inner membrane. The protein resides in the golgi apparatus membrane. In terms of biological role, involved in the cell surface expression of neuronal nicotinic receptors. Binds RNA. The polypeptide is Protein unc-50 homolog (Unc50) (Mus musculus (Mouse)).